A 307-amino-acid chain; its full sequence is Acetyl-coenzyme A carboxylase carboxyl transferase subunit beta (307 aa).

The region spanning 28–297 (LWVKCPDTGQ…TPQPGTAPEP (270 aa)) is the CoA carboxyltransferase N-terminal domain. The interval 286-307 (RRTPQPGTAPEPTTPEPLPNAA) is disordered. A compositionally biased stretch (pro residues) spans 292 to 307 (GTAPEPTTPEPLPNAA).

The protein belongs to the AccD/PCCB family. As to quaternary structure, acetyl-CoA carboxylase is a heterohexamer composed of biotin carboxyl carrier protein (AccB), biotin carboxylase (AccC) and two subunits each of ACCase subunit alpha (AccA) and ACCase subunit beta (AccD).

Its subcellular location is the cytoplasm. It carries out the reaction N(6)-carboxybiotinyl-L-lysyl-[protein] + acetyl-CoA = N(6)-biotinyl-L-lysyl-[protein] + malonyl-CoA. The protein operates within lipid metabolism; malonyl-CoA biosynthesis; malonyl-CoA from acetyl-CoA: step 1/1. Component of the acetyl coenzyme A carboxylase (ACC) complex. Biotin carboxylase (BC) catalyzes the carboxylation of biotin on its carrier protein (BCCP) and then the CO(2) group is transferred by the transcarboxylase to acetyl-CoA to form malonyl-CoA. In Methylorubrum extorquens (strain CM4 / NCIMB 13688) (Methylobacterium extorquens), this protein is Acetyl-coenzyme A carboxylase carboxyl transferase subunit beta.